A 504-amino-acid chain; its full sequence is Apoptosis inhibitor 5 (504 aa).

Residues 1–360 are ARM-like and Heat-like helical repeats; the sequence is MPTVEELYRN…HQLGRKLPDF (360 aa). An N6-acetyllysine modification is found at Lys-251. The tract at residues 370–391 is leucine-zipper; that stretch reads LKDFKIRLQYFARGLQVYIRQL. A Phosphothreonine modification is found at Thr-399. A disordered region spans residues 452-504; that stretch reads GQKRASEDTTSGSPPKKSSAGPKRDARQIYNPPSGKYSSNLGNFNYERSLQGK. Positions 454 to 475 match the Nuclear localization signal motif; it reads KRASEDTTSGSPPKKSSAGPKR. Phosphoserine occurs at positions 462, 464, and 469. The segment covering 462-472 has biased composition (low complexity); sequence SGSPPKKSSAG. Polar residues predominate over residues 487 to 504; sequence KYSSNLGNFNYERSLQGK.

It belongs to the API5 family. Monomer. Interacts with FGF2 and ACIN1. Post-translationally, acetylation at Lys-251 impairs antiapoptotic function.

Its subcellular location is the nucleus. The protein localises to the cytoplasm. In terms of biological role, antiapoptotic factor that may have a role in protein assembly. Negatively regulates ACIN1. By binding to ACIN1, it suppresses ACIN1 cleavage from CASP3 and ACIN1-mediated DNA fragmentation. Also known to efficiently suppress E2F1-induced apoptosis. This Pongo abelii (Sumatran orangutan) protein is Apoptosis inhibitor 5 (API5).